The primary structure comprises 670 residues: DNA ligase (670 aa).

Residues 35-39 (DSVYD), 84-85 (SL), and Glu116 each bind NAD(+). The active-site N6-AMP-lysine intermediate is Lys118. NAD(+) contacts are provided by Arg139, Glu176, Lys293, and Lys317. Residues Cys411, Cys414, Cys429, and Cys435 each contribute to the Zn(2+) site. The BRCT domain occupies 592–670 (VVKSEIAGKT…EEAFLKLLKS (79 aa)).

This sequence belongs to the NAD-dependent DNA ligase family. LigA subfamily. Requires Mg(2+) as cofactor. Mn(2+) serves as cofactor.

The enzyme catalyses NAD(+) + (deoxyribonucleotide)n-3'-hydroxyl + 5'-phospho-(deoxyribonucleotide)m = (deoxyribonucleotide)n+m + AMP + beta-nicotinamide D-nucleotide.. DNA ligase that catalyzes the formation of phosphodiester linkages between 5'-phosphoryl and 3'-hydroxyl groups in double-stranded DNA using NAD as a coenzyme and as the energy source for the reaction. It is essential for DNA replication and repair of damaged DNA. The chain is DNA ligase from Coxiella burnetii (strain RSA 331 / Henzerling II).